The primary structure comprises 446 residues: DNA repair protein RadA (446 aa).

The C4-type zinc-finger motif lies at 10-27 (CSNCGNTSPKWSGQCFDC). An ATP-binding site is contributed by 91–98 (GDPGIGKS). The short motif at 250–254 (KNRFG) is the RadA KNRFG motif element. Residues 349–446 (EVYLSIAGGL…HLKDLKEIIR (98 aa)) are lon-protease-like.

The protein belongs to the RecA family. RadA subfamily.

In terms of biological role, DNA-dependent ATPase involved in processing of recombination intermediates, plays a role in repairing DNA breaks. Stimulates the branch migration of RecA-mediated strand transfer reactions, allowing the 3' invading strand to extend heteroduplex DNA faster. Binds ssDNA in the presence of ADP but not other nucleotides, has ATPase activity that is stimulated by ssDNA and various branched DNA structures, but inhibited by SSB. Does not have RecA's homology-searching function. The polypeptide is DNA repair protein RadA (Rickettsia felis (strain ATCC VR-1525 / URRWXCal2) (Rickettsia azadi)).